A 148-amino-acid chain; its full sequence is MKTLLVLALLLLSVSVQAKVYDRCEFARILKKSGMDGYRGVSLANWVCLAKWESNFNTKATNYNPGSQSTDYGIFQINSRYWCNDGKTPKAVNACHISCKVLLDDDLSQDIECAKRVVRDPQGIKAWVAWKAHCQNKDVSQYIRGCKL.

A signal peptide spans 1–18 (MKTLLVLALLLLSVSVQA). The 130-residue stretch at 19 to 148 (KVYDRCEFAR…VSQYIRGCKL (130 aa)) folds into the C-type lysozyme domain. 4 disulfide bridges follow: C24–C146, C48–C134, C83–C99, and C95–C113. Residues E53 and D71 contribute to the active site.

This sequence belongs to the glycosyl hydrolase 22 family. As to quaternary structure, monomer.

The protein localises to the secreted. The enzyme catalyses Hydrolysis of (1-&gt;4)-beta-linkages between N-acetylmuramic acid and N-acetyl-D-glucosamine residues in a peptidoglycan and between N-acetyl-D-glucosamine residues in chitodextrins.. Its function is as follows. Lysozymes have primarily a bacteriolytic function; those in tissues and body fluids are associated with the monocyte-macrophage system and enhance the activity of immunoagents. This is Lysozyme C-3 from Sus scrofa (Pig).